Here is a 677-residue protein sequence, read N- to C-terminus: DNA ligase (677 aa).

NAD(+) contacts are provided by residues 43–47, 92–93, and glutamate 122; these read DHVYD and SM. The N6-AMP-lysine intermediate role is filled by lysine 124. Positions 145, 179, 295, and 319 each coordinate NAD(+). Zn(2+)-binding residues include cysteine 413, cysteine 416, cysteine 431, and cysteine 436. A BRCT domain is found at 599-677; that stretch reads TSDSYFNGKT…EADLDNYLAQ (79 aa).

It belongs to the NAD-dependent DNA ligase family. LigA subfamily. Mg(2+) serves as cofactor. The cofactor is Mn(2+).

It carries out the reaction NAD(+) + (deoxyribonucleotide)n-3'-hydroxyl + 5'-phospho-(deoxyribonucleotide)m = (deoxyribonucleotide)n+m + AMP + beta-nicotinamide D-nucleotide.. DNA ligase that catalyzes the formation of phosphodiester linkages between 5'-phosphoryl and 3'-hydroxyl groups in double-stranded DNA using NAD as a coenzyme and as the energy source for the reaction. It is essential for DNA replication and repair of damaged DNA. In Latilactobacillus sakei subsp. sakei (strain 23K) (Lactobacillus sakei subsp. sakei), this protein is DNA ligase.